Here is a 37-residue protein sequence, read N- to C-terminus: Large ribosomal subunit protein bL36 (37 aa).

The protein belongs to the bacterial ribosomal protein bL36 family.

The protein is Large ribosomal subunit protein bL36 of Rippkaea orientalis (strain PCC 8801 / RF-1) (Cyanothece sp. (strain PCC 8801)).